The following is a 756-amino-acid chain: Alpha-1,2-mannosyltransferase MNN26 (756 aa).

Over 1-10 the chain is Cytoplasmic; that stretch reads MSLRRLSPSH. The helical transmembrane segment at 11–31 threads the bilayer; the sequence is LILGTLVLGVIIFNLYVLTST. The Extracellular segment spans residues 32–756; it reads HEDIKKVKGP…NGKNKQGAAS (725 aa). The segment covering 723 to 734 has biased composition (polar residues); the sequence is LGEKSQPKQPEI. The disordered stretch occupies residues 723–756; the sequence is LGEKSQPKQPEINNNNNNNNNDDDNGKNKQGAAS.

It belongs to the MNN1/MNT family.

Its subcellular location is the golgi apparatus membrane. It participates in protein modification; protein glycosylation. Its function is as follows. Alpha-1,2-mannosyltransferase required for cell wall integrity. Responsible for addition of the first alpha-1,2-linked mannose to form the branches on the mannan backbone of oligosaccharides. Addition of alpha-1,2-mannose is required for stabilization of the alpha-1,6-mannose backbone and hence regulates mannan fibril length; and is important for both immune recognition and virulence. This is Alpha-1,2-mannosyltransferase MNN26 (MNN26) from Candida albicans (strain SC5314 / ATCC MYA-2876) (Yeast).